The primary structure comprises 388 residues: Diphosphomevalonate decarboxylase (388 aa).

(R)-5-diphosphomevalonate-binding positions include 19–22 (YWGK), R74, 153–158 (SGSACR), and T209. Residues 367 to 388 (QGPQGSSESLINDKGLPKAVAN) are disordered.

This sequence belongs to the diphosphomevalonate decarboxylase family. Homodimer.

The enzyme catalyses (R)-5-diphosphomevalonate + ATP = isopentenyl diphosphate + ADP + phosphate + CO2. It functions in the pathway isoprenoid biosynthesis; isopentenyl diphosphate biosynthesis via mevalonate pathway; isopentenyl diphosphate from (R)-mevalonate: step 3/3. Functionally, diphosphomevalonate decarboxylase; part of the second module of ergosterol biosynthesis pathway that includes the middle steps of the pathway. The second module is carried out in the vacuole and involves the formation of farnesyl diphosphate, which is also an important intermediate in the biosynthesis of ubiquinone, dolichol, heme and prenylated proteins. Activity by the mevalonate kinase ERG12 first converts mevalonate into 5-phosphomevalonate. 5-phosphomevalonate is then further converted to 5-diphosphomevalonate by the phosphomevalonate kinase ERG8. The diphosphomevalonate decarboxylase MVD1/ERG19 then produces isopentenyl diphosphate. The isopentenyl-diphosphate delta-isomerase IDI1 then catalyzes the 1,3-allylic rearrangement of the homoallylic substrate isopentenyl (IPP) to its highly electrophilic allylic isomer, dimethylallyl diphosphate (DMAPP). Finally the farnesyl diphosphate synthase ERG20 catalyzes the sequential condensation of isopentenyl pyrophosphate with dimethylallyl pyrophosphate, and then with the resultant geranylpyrophosphate to the ultimate product farnesyl pyrophosphate. The chain is Diphosphomevalonate decarboxylase from Debaryomyces hansenii (strain ATCC 36239 / CBS 767 / BCRC 21394 / JCM 1990 / NBRC 0083 / IGC 2968) (Yeast).